The primary structure comprises 205 residues: Probable GTP-binding protein EngB (205 aa).

Positions 27–201 constitute an EngB-type G domain; that stretch reads TGIEIAFAGR…AAKLDFWFSP (175 aa). Residues 35-42, 62-66, 80-83, 147-150, and 180-182 contribute to the GTP site; these read GRSNAGKS, GRTQL, DLPG, TKAD, and FSA. 2 residues coordinate Mg(2+): S42 and T64.

The protein belongs to the TRAFAC class TrmE-Era-EngA-EngB-Septin-like GTPase superfamily. EngB GTPase family. Mg(2+) is required as a cofactor.

In terms of biological role, necessary for normal cell division and for the maintenance of normal septation. This is Probable GTP-binding protein EngB from Haemophilus influenzae (strain 86-028NP).